Here is a 39-residue protein sequence, read N- to C-terminus: Photosystem II reaction center protein X (39 aa).

A helical transmembrane segment spans residues 10 to 30 (SSLVWAAVIVVIPAAVALVLI).

The protein belongs to the PsbX family. Type 1 subfamily. As to quaternary structure, PSII is composed of 1 copy each of membrane proteins PsbA, PsbB, PsbC, PsbD, PsbE, PsbF, PsbH, PsbI, PsbJ, PsbK, PsbL, PsbM, PsbT, PsbX, PsbY, Psb30/Ycf12, peripheral proteins PsbO, CyanoQ (PsbQ), PsbU, PsbV and a large number of cofactors. It forms dimeric complexes.

The protein resides in the cellular thylakoid membrane. Involved in the binding and/or turnover of quinones at the Q(B) site of photosystem II (PSII). PSII is a light-driven water plastoquinone oxidoreductase, using light energy to abstract electrons from H(2)O, generating a proton gradient subsequently used for ATP formation. This Prochlorococcus marinus (strain MIT 9303) protein is Photosystem II reaction center protein X.